Here is a 96-residue protein sequence, read N- to C-terminus: Cytochrome c2 iso-2 (96 aa).

Residues Cys10, Cys13, His14, and Met75 each coordinate heme c.

This sequence belongs to the cytochrome c family. Post-translationally, binds 1 heme c group covalently per subunit.

Its function is as follows. Cytochrome c2 is found mainly in purple, non-sulfur, photosynthetic bacteria where it functions as the electron donor to the oxidized bacteriochlorophyll in the photophosphorylation pathway. However, it may also have a role in the respiratory chain and is found in some non-photosynthetic bacteria. In Magnetospirillum fulvum (Rhodospirillum fulvum), this protein is Cytochrome c2 iso-2.